The primary structure comprises 90 residues: Probable Fe(2+)-trafficking protein (90 aa).

Belongs to the Fe(2+)-trafficking protein family.

Its function is as follows. Could be a mediator in iron transactions between iron acquisition and iron-requiring processes, such as synthesis and/or repair of Fe-S clusters in biosynthetic enzymes. The chain is Probable Fe(2+)-trafficking protein from Ectopseudomonas mendocina (strain ymp) (Pseudomonas mendocina).